Consider the following 328-residue polypeptide: Phosphate acyltransferase (328 aa).

This sequence belongs to the PlsX family. Homodimer. Probably interacts with PlsY.

It localises to the cytoplasm. The catalysed reaction is a fatty acyl-[ACP] + phosphate = an acyl phosphate + holo-[ACP]. Its pathway is lipid metabolism; phospholipid metabolism. In terms of biological role, catalyzes the reversible formation of acyl-phosphate (acyl-PO(4)) from acyl-[acyl-carrier-protein] (acyl-ACP). This enzyme utilizes acyl-ACP as fatty acyl donor, but not acyl-CoA. This chain is Phosphate acyltransferase, found in Staphylococcus aureus (strain MRSA252).